Consider the following 222-residue polypeptide: Germin-like protein subfamily 1 member 20 (222 aa).

Positions 1 to 22 (MRVSQSLVPFAIIALVLSFVNA) are cleaved as a signal peptide. A disulfide bridge links Cys32 with Cys48. One can recognise a Cupin type-1 domain in the interval 62–213 (SGLNVPGNTN…AFQLDASVVK (152 aa)). Asn77 is a glycosylation site (N-linked (GlcNAc...) asparagine). Mn(2+) contacts are provided by His110, His112, Glu117, and His159.

It belongs to the germin family. Oligomer (believed to be a pentamer but probably hexamer). In terms of tissue distribution, expressed in stems and developing embryos.

It is found in the secreted. It localises to the extracellular space. Its subcellular location is the apoplast. Functionally, may play a role in plant defense. Probably has no oxalate oxidase activity even if the active site is conserved. This Arabidopsis thaliana (Mouse-ear cress) protein is Germin-like protein subfamily 1 member 20 (GLP5A).